The sequence spans 742 residues: Collectin-12 (742 aa).

Residues 1 to 37 lie on the Cytoplasmic side of the membrane; sequence MKDDFAEEEEVQSFGYKRFGIQEGTQCTKCKNNWALK. A helical; Signal-anchor for type II membrane protein membrane pass occupies residues 38-58; the sequence is FSIVLLYILCALLTITVAILG. The Extracellular portion of the chain corresponds to 59-742; sequence YKVVEKMDNV…EREAVPSSIL (684 aa). A glycan (N-linked (GlcNAc...) asparagine) is linked at asparagine 67. Residues 73–142 are a coiled coil; the sequence is ETSHQTYDNK…KDTLEKLQAN (70 aa). Residues asparagine 159 and asparagine 168 are each glycosylated (N-linked (GlcNAc...) asparagine). A coiled-coil region spans residues 205 to 254; sequence NLNNLNLTQVQQRNLISNLQQSVDDTSLAIQRIKNDFQNLQQVFLQAKKD. Residue asparagine 271 is glycosylated (N-linked (GlcNAc...) asparagine). Positions 439 to 608 are disordered; sequence TILQGPPGPR…TPASEVNGCP (170 aa). Collagen-like domains lie at 452–511 and 527–586; these read GDRG…KGSR and GPPG…PGPS. Residues 501–514 show a composition bias toward low complexity; sequence SKGSQGPKGSRGSP. Residues 516 to 532 are compositionally biased toward pro residues; it reads KPGPQGPSGDPGPPGPP. Residues 534–556 are compositionally biased toward low complexity; sequence KDGLPGPQGPPGFQGLQGTVGEP. Residues 571–585 show a composition bias toward pro residues; the sequence is PGMPGPKGPPGPPGP. 3 disulfides stabilise this stretch: cysteine 607–cysteine 618, cysteine 635–cysteine 730, and cysteine 708–cysteine 722. Positions 614-731 constitute a C-type lectin domain; it reads FTDKCYYFSL…CDEINNFICE (118 aa). Ca(2+) contacts are provided by phenylalanine 644, asparagine 646, glutamate 650, aspartate 670, and glutamate 674. A carbohydrate is bound by residues lysine 691, glutamine 694, and aspartate 696. The Ca(2+) site is built by glutamine 694, aspartate 696, asparagine 697, glutamate 706, aspartate 707, asparagine 718, aspartate 719, and glutamate 731. Glutamate 706 contacts a carbohydrate. 2 residues coordinate a carbohydrate: asparagine 718 and aspartate 719.

As to quaternary structure, the extracellular domain forms a stable trimer. The extracellular domain interacts with fibrillar amyloid-beta peptide. As to expression, expressed in vascular endothelial cells in the heart, in perivascular macrophage and smooth muscle cells. Expressed in plaques-surrounding reactive astrocytes located in cerebral cortex and hippocampus and in leptomeningeal vessels showing characteristics of cerebral amyloid angiopathy (CAA) in a double transgenic mouse model of Alzheimer disease (at protein level). Strongly expressed in lung. Moderately expressed in heart, skeletal muscle, spleen, liver, brain, colon, testis, stomach and kidney. Expressed in neonatal astrocytes. Expressed in reactive astrocytes and vascular/perivascular cells in the brain of a double transgenic mouse model of Alzheimer disease.

The protein localises to the membrane. Its function is as follows. Scavenger receptor that displays several functions associated with host defense. Promotes binding and phagocytosis of Gram-positive, Gram-negative bacteria and yeast. Also binds to sialyl Lewis X or a trisaccharide and asialo-orosomucoid (ASOR). Mediates the recognition, internalization and degradation of oxidatively modified low density lipoprotein (oxLDL) by vascular endothelial cells. Binds to several carbohydrates including Gal-type ligands, D-galactose, L- and D-fucose, GalNAc, T and Tn antigens in a calcium-dependent manner and internalizes specifically GalNAc in nurse-like cells. In Mus musculus (Mouse), this protein is Collectin-12 (Colec12).